The chain runs to 415 residues: Transcription factor gsfR2 (415 aa).

The segment at residues 9–36 (CITCVQSKRKCDQGLPKCQRCLAKNIHC) is a DNA-binding region (zn(2)-C6 fungal-type). A disordered region spans residues 65 to 91 (AEEPSRGCQLQRSPARPTSPTHSPHAN). Residues 72–88 (CQLQRSPARPTSPTHSP) are compositionally biased toward polar residues.

Its subcellular location is the nucleus. In terms of biological role, transcription factor that regulates expression of the gene cluster that mediates the biosynthesis of Griseofulvin, an important antifungal drug that has been in use for a long time for treating dermatophyte infections. The sequence is that of Transcription factor gsfR2 from Penicillium aethiopicum.